The primary structure comprises 92 residues: Toxin RelE3 (92 aa).

It belongs to the RelE toxin family.

Functionally, toxic component of a type II toxin-antitoxin (TA) system. Its toxic effect is neutralized by coexpression with cognate antitoxin RelB3 but no other ParD or RelB antitoxin. This is Toxin RelE3 (relE3) from Caulobacter vibrioides (strain ATCC 19089 / CIP 103742 / CB 15) (Caulobacter crescentus).